The sequence spans 472 residues: UDP-N-acetylmuramate--L-alanine ligase (472 aa).

Glycine 121–threonine 127 provides a ligand contact to ATP.

This sequence belongs to the MurCDEF family.

It is found in the cytoplasm. The enzyme catalyses UDP-N-acetyl-alpha-D-muramate + L-alanine + ATP = UDP-N-acetyl-alpha-D-muramoyl-L-alanine + ADP + phosphate + H(+). It participates in cell wall biogenesis; peptidoglycan biosynthesis. Functionally, cell wall formation. In Hahella chejuensis (strain KCTC 2396), this protein is UDP-N-acetylmuramate--L-alanine ligase.